Reading from the N-terminus, the 119-residue chain is Large ribosomal subunit protein bL19 (119 aa).

It belongs to the bacterial ribosomal protein bL19 family.

Functionally, this protein is located at the 30S-50S ribosomal subunit interface and may play a role in the structure and function of the aminoacyl-tRNA binding site. This is Large ribosomal subunit protein bL19 from Leuconostoc citreum (strain KM20).